A 307-amino-acid polypeptide reads, in one-letter code: Potassium channel subfamily K member 7 (307 aa).

Topologically, residues 1–10 (MGSLKPWARY) are cytoplasmic. Residues 11–31 (LLLLMAHLLAMGLGAVVLQAL) traverse the membrane as a helical segment. Asn-83 carries an N-linked (GlcNAc...) asparagine glycan. Residues 92–118 (LPSALLFTASILTTTGYGHMAPLSSGG) constitute an intramembrane region (pore-forming). A helical membrane pass occupies residues 120–140 (AFCVVYAALGLPASLALVAAL). Residues 141–172 (RHCLLPVFSRPGDWVAIRWQLAPAQAALLQAA) are Cytoplasmic-facing. A helical membrane pass occupies residues 173-193 (GLGLLVACVFMLLPALVLWGV). Positions 199–227 (LLEAIYFCFGSLSTIGLGDLLPAHGRGLH) form an intramembrane region, pore-forming. Residues 233–253 (LGQFALLGYLLLGLLAMLLAV) traverse the membrane as a helical segment. The Cytoplasmic portion of the chain corresponds to 254–307 (ETFSELPQVRAMVKFFGPSGSRTDEDQDGILGQDELALSTVLPDAPVLGPTTPA).

This sequence belongs to the two pore domain potassium channel (TC 1.A.1.8) family. As to quaternary structure, homodimer. Detected in embryo, eye, lung and liver. Weakly expressed in colon, testis, atria, kidney, intestine, bladder, uterus, ovary, salivary gland, thymus and brain stem. Not detected in brain, cerebellum, spinal cord, heart, ventricle, skeletal muscle, liver, placenta and pancreas. In the eye, highly expressed in the retinal ganglion cell layer and inner nuclear layer.

It is found in the membrane. Functionally, probable potassium channel subunit. No channel activity observed in vitro as protein remains in the endoplasmic reticulum. May need to associate with an as yet unknown partner in order to reach the plasma membrane. This Mus musculus (Mouse) protein is Potassium channel subfamily K member 7 (Kcnk7).